The primary structure comprises 243 residues: Triosephosphate isomerase (243 aa).

9-11 contacts substrate; that stretch reads NWK. The active-site Electrophile is histidine 96. Glutamate 165 (proton acceptor) is an active-site residue. Residues glycine 171, serine 204, and 225–226 each bind substrate; that span reads GG.

Belongs to the triosephosphate isomerase family. Homodimer.

It localises to the cytoplasm. The catalysed reaction is D-glyceraldehyde 3-phosphate = dihydroxyacetone phosphate. Its pathway is carbohydrate biosynthesis; gluconeogenesis. It participates in carbohydrate degradation; glycolysis; D-glyceraldehyde 3-phosphate from glycerone phosphate: step 1/1. Functionally, involved in the gluconeogenesis. Catalyzes stereospecifically the conversion of dihydroxyacetone phosphate (DHAP) to D-glyceraldehyde-3-phosphate (G3P). This is Triosephosphate isomerase from Prochlorococcus marinus (strain MIT 9313).